The primary structure comprises 99 residues: A-type ATP synthase subunit F (99 aa).

Belongs to the V-ATPase F subunit family. As to quaternary structure, has multiple subunits with at least A(3), B(3), C, D, E, F, H, I and proteolipid K(x).

The protein localises to the cell membrane. Component of the A-type ATP synthase that produces ATP from ADP in the presence of a proton gradient across the membrane. This is A-type ATP synthase subunit F from Methanocella arvoryzae (strain DSM 22066 / NBRC 105507 / MRE50).